Consider the following 311-residue polypeptide: Aspartate carbamoyltransferase catalytic subunit (311 aa).

Residues arginine 55 and threonine 56 each contribute to the carbamoyl phosphate site. Position 85 (lysine 85) interacts with L-aspartate. Positions 106, 135, and 138 each coordinate carbamoyl phosphate. Positions 168 and 230 each coordinate L-aspartate. Leucine 268 and proline 269 together coordinate carbamoyl phosphate.

The protein belongs to the aspartate/ornithine carbamoyltransferase superfamily. ATCase family. Heterododecamer (2C3:3R2) of six catalytic PyrB chains organized as two trimers (C3), and six regulatory PyrI chains organized as three dimers (R2).

It carries out the reaction carbamoyl phosphate + L-aspartate = N-carbamoyl-L-aspartate + phosphate + H(+). The protein operates within pyrimidine metabolism; UMP biosynthesis via de novo pathway; (S)-dihydroorotate from bicarbonate: step 2/3. Its function is as follows. Catalyzes the condensation of carbamoyl phosphate and aspartate to form carbamoyl aspartate and inorganic phosphate, the committed step in the de novo pyrimidine nucleotide biosynthesis pathway. The sequence is that of Aspartate carbamoyltransferase catalytic subunit from Yersinia pestis.